The following is a 201-amino-acid chain: Protein CIMAP1C (201 aa).

The STPGR repeat unit spans residues 171 to 186; the sequence is PAPTMSSRSGHTSPAR. Residues 172–201 are disordered; that stretch reads APTMSSRSGHTSPARLLSPWASSTRPTYAR. A compositionally biased stretch (polar residues) spans 191-201; that stretch reads WASSTRPTYAR.

It belongs to the CIMAP family.

The polypeptide is Protein CIMAP1C (CIMAP1C) (Bos taurus (Bovine)).